The primary structure comprises 289 residues: Mitochondrial fission regulator 1-like (289 aa).

Threonine 27 is modified (phosphothreonine). At serine 38 the chain carries Phosphoserine. Serine 100 carries the post-translational modification Phosphoserine; by AMPK. Phosphoserine occurs at positions 107, 221, and 222. At serine 235 the chain carries Phosphoserine; by AMPK. 2 positions are modified to phosphoserine: serine 258 and serine 270.

It belongs to the MTFR1 family. In terms of processing, phosphorylated by AMPK. Upon stress, phosphorylation at Ser-100 and Ser-235 by AMPK is sufficient to induce mitochondrial fragmentation.

The protein resides in the mitochondrion outer membrane. Mitochondrial protein required for adaptation of miochondrial dynamics to metabolic changes. Regulates mitochondrial morphology at steady state and mediates AMPK-dependent stress-induced mitochondrial fragmentation via the control of OPA1 levels. This chain is Mitochondrial fission regulator 1-like (Mtfr1l), found in Mus musculus (Mouse).